The sequence spans 312 residues: Glyoxylate/hydroxypyruvate reductase A (312 aa).

The active site involves arginine 227. The active-site Proton donor is the histidine 275.

This sequence belongs to the D-isomer specific 2-hydroxyacid dehydrogenase family. GhrA subfamily.

It localises to the cytoplasm. The catalysed reaction is glycolate + NADP(+) = glyoxylate + NADPH + H(+). It carries out the reaction (R)-glycerate + NAD(+) = 3-hydroxypyruvate + NADH + H(+). It catalyses the reaction (R)-glycerate + NADP(+) = 3-hydroxypyruvate + NADPH + H(+). Its function is as follows. Catalyzes the NADPH-dependent reduction of glyoxylate and hydroxypyruvate into glycolate and glycerate, respectively. This chain is Glyoxylate/hydroxypyruvate reductase A, found in Escherichia fergusonii (strain ATCC 35469 / DSM 13698 / CCUG 18766 / IAM 14443 / JCM 21226 / LMG 7866 / NBRC 102419 / NCTC 12128 / CDC 0568-73).